Here is a 456-residue protein sequence, read N- to C-terminus: DEAD-box ATP-dependent RNA helicase 10 (456 aa).

Positions 9–37 (KTFAELGVREELVKACERLGWKNPSKIQA) match the Q motif motif. One can recognise a Helicase ATP-binding domain in the interval 40–223 (LPFALEGKDV…RACLRNPVKI (184 aa)). Position 53–60 (53–60 (AQTGSGKT)) interacts with ATP. The short motif at 171–174 (DEAD) is the DEAD box element. A Helicase C-terminal domain is found at 250–394 (YLVYILSEMP…EYPAEEDEVL (145 aa)). The interval 407 to 456 (SAMNMKESGGRKRRGEDDEESERFLGGNKDRGNKERGGNKDKKSSKKFKR) is disordered. Residues 434 to 448 (NKDRGNKERGGNKDK) are compositionally biased toward basic and acidic residues.

It belongs to the DEAD box helicase family. DDX47/RRP3 subfamily. As to expression, expressed in all tissues and organs examined including root, cotyledon, first and second leaves, third and fourth leaves, fifth and sixth leaves, shoot apex, flower, flower bud, cauline leaf and rosette leaves.

The protein resides in the nucleus. The protein localises to the nucleolus. The enzyme catalyses ATP + H2O = ADP + phosphate + H(+). Its function is as follows. Involved in leaf polarity establishment by functioning cooperatively with AS2 to repress abaxial genes ARF3, ARF4, KAN1, KAN2, YAB1 and YAB5, and the knox homeobox genes KNAT1, KNAT2, KNAT6, and STM to promote adaxial development in leaf primordia at shoot apical meristems at high temperatures. Involved in the processing of pre-rRNA intermediates at high temperatures. The polypeptide is DEAD-box ATP-dependent RNA helicase 10 (RH10) (Arabidopsis thaliana (Mouse-ear cress)).